Reading from the N-terminus, the 437-residue chain is Elongator complex protein 4 (437 aa).

The interval 179–247 (FSKSSSPTTP…TKTGSQDSPL (69 aa)) is disordered. The segment covering 181–192 (KSSSPTTPSLEQ) has biased composition (polar residues). Ser183 carries the phosphoserine modification. A compositionally biased stretch (low complexity) spans 220-237 (SANNNNNNNNNSSSVTSS). The residue at position 242 (Ser242) is a Phosphoserine.

The protein belongs to the ELP4 family. As to quaternary structure, component of the elongator complex composed of Elp1, Elp2, Elp3, Elp4, Elp5 and Elp6. The elongator complex associates with and stabilizes microtubules; efficient interaction requires the full complex.

It is found in the cytoplasm. Its subcellular location is the nucleus. The protein localises to the cytoskeleton. The protein resides in the spindle. It functions in the pathway tRNA modification; 5-methoxycarbonylmethyl-2-thiouridine-tRNA biosynthesis. In terms of biological role, component of the elongator complex, which is required for multiple tRNA modifications, including mcm5U (5-methoxycarbonylmethyl uridine), mcm5s2U (5-methoxycarbonylmethyl-2-thiouridine), and ncm5U (5-carbamoylmethyl uridine). The elongator complex catalyzes the formation of carboxymethyluridine in the wobble base at position 34 in tRNAs. Binding by the elongator complex stabilizes microtubules and promotes their growth. This induces central spindle asymmetry, promoting polarized signaling endosome trafficking during asymmetric cell division and cell fate assignation of sensory organ precursor cells. In Drosophila melanogaster (Fruit fly), this protein is Elongator complex protein 4.